The primary structure comprises 86 residues: Cell division topological specificity factor (86 aa).

It belongs to the MinE family.

Functionally, prevents the cell division inhibition by proteins MinC and MinD at internal division sites while permitting inhibition at polar sites. This ensures cell division at the proper site by restricting the formation of a division septum at the midpoint of the long axis of the cell. This chain is Cell division topological specificity factor, found in Aliivibrio salmonicida (strain LFI1238) (Vibrio salmonicida (strain LFI1238)).